A 129-amino-acid polypeptide reads, in one-letter code: M-zodatoxin-Lt8f (129 aa).

A signal peptide spans methionine 1–serine 20. Positions lysine 21–arginine 60 are excised as a propeptide. Residues glutamate 57 to arginine 60 carry the Processing quadruplet motif motif.

In terms of processing, cleavage of the propeptide depends on the processing quadruplet motif (XXXR, with at least one of X being E). In terms of tissue distribution, expressed by the venom gland.

Its subcellular location is the secreted. Insecticidal, cytolytic and antimicrobial peptide. Has insecticidal activity against the flesh fly S.carnaria. Has antibacterial activity against the Gram-negative bacteria E.coli. Forms voltage-dependent, ion-permeable channels in membranes. At high concentration causes cell membrane lysis. The sequence is that of M-zodatoxin-Lt8f (cit 1-7) from Lachesana tarabaevi (Spider).